The following is a 301-amino-acid chain: Phosphatidylcholine:diacylglycerol cholinephosphotransferase 1 (301 aa).

Residues 1-39 form a disordered region; it reads MSAAAAETDVSLRRRSNSLNGNHTNGVAIDGTLDNNNRR. A run of 5 helical transmembrane segments spans residues 88-108, 141-161, 171-191, 202-222, and 255-275; these read HWIP…EYTL, VLAA…VWTW, IAAL…QLPL, FPVG…GSMI, and GHYT…DSLA. Active-site residues include histidine 216, histidine 256, and aspartate 260.

This sequence belongs to the phosphatidylcholine:diacylglycerol cholinephosphotransferase family.

The protein localises to the membrane. The catalysed reaction is 1,2-ditetradecanoyl-sn-glycero-3-phosphocholine + 1,2-di-(9Z-octadecenoyl)-sn-glycerol = 1,2-ditetradecanoyl-sn-glycerol + 1,2-di-(9Z-octadecenoyl)-sn-glycero-3-phosphocholine. Functions as a phosphatidylcholine:diacylglycerol cholinephosphotransferase that catalyzes the transfer of the phosphocholine headgroup from phosphatidylcholine (PC) to diacylglycerol, a major reaction for the transfer of 18:1 into phosphatidylcholine for desaturation and also for the reverse transfer of 18:2 and 18:3 into the triacylglycerols synthesis pathway. The polypeptide is Phosphatidylcholine:diacylglycerol cholinephosphotransferase 1 (Arabidopsis thaliana (Mouse-ear cress)).